Consider the following 564-residue polypeptide: MFS-type efflux pump LUC4 (564 aa).

Polar residues predominate over residues 1 to 15; the sequence is MGQSQDNTQLTTASP. The segment at 1–35 is disordered; the sequence is MGQSQDNTQLTTASPQAEKDLSSNDNPPESEPAAP. The next 5 membrane-spanning stretches (helical) occupy residues 42–62, 78–98, 108–128, 141–161, and 170–190; these read WLVF…TSII, LYVW…PIFA, SLTL…GGAH, GVGG…MVSV, and IIGG…GAFA. Residue Asn-192 is glycosylated (N-linked (GlcNAc...) asparagine). Transmembrane regions (helical) follow at residues 197–217, 236–256, and 268–288; these read WIFY…IVFL, WGGS…LSWG, and LVPL…QGAP. Asn-302 is a glycosylation site (N-linked (GlcNAc...) asparagine). Helical transmembrane passes span 308 to 328, 343 to 363, 371 to 391, 404 to 424, and 436 to 456; these read LFVI…FLPV, VMLF…GIFI, VWHF…TLLD, LLFG…ILAS, and AWTF…AAAF. A glycan (N-linked (GlcNAc...) asparagine) is linked at Asn-461. A helical membrane pass occupies residues 512-532; the sequence is KLVWQVSIAFSVLGFVLAFLV.

This sequence belongs to the major facilitator superfamily. TCR/Tet family.

Its subcellular location is the membrane. In terms of biological role, MFS-type efflux pump; part of the gene cluster that mediates the biosynthesis of the mycotoxin lucilactaene and the lucilactaene-related compound NG-391 that act as cell cycle inhibitors with potent growth inhibitory activity against malarial parasites, moderate growth inhibitory activity against cancer cells, and no activity against bacteria and fungi. This Fusarium sp protein is MFS-type efflux pump LUC4.